The sequence spans 266 residues: 3-oxoadipate enol-lactonase 1 (266 aa).

Residues 28-250 (PAIVFSNSLG…DASHLSNIEQ (223 aa)) enclose the AB hydrolase-1 domain.

It carries out the reaction (4,5-dihydro-5-oxofuran-2-yl)-acetate + H2O = 3-oxoadipate + H(+). Its pathway is aromatic compound metabolism; beta-ketoadipate pathway; 3-oxoadipate from 5-oxo-4,5-dihydro-2-furylacetate: step 1/1. This Acinetobacter baylyi (strain ATCC 33305 / BD413 / ADP1) protein is 3-oxoadipate enol-lactonase 1 (pcaD).